The chain runs to 283 residues: MKHYLELCQRIVDEGVWVENARTGKRCLTVIDADLTYDVANNQFPLITTRKSYWKAAIAEFLGYIRGYDNAADFRKLGTKTWDANANENSAWLNNPHRKGTDDMGRVYGVQGRAWRKPNGETVDQLRKIVNNLRNGIDDRGEIMTFFNPGEFELGCLRPCMHTHTFSLLGDTLYLTSYQRSCDVPLGLNFNQIQVFTFLALMAQITGKKAGKAYHKIINAHIYEDQLDLMKNVQLKRDPFPLPQLHINPEIKTLEDLETWVTMDDFKVTGYQCHDAIKYPFSV.

Arginine 22 lines the dUMP pocket. Catalysis depends on cysteine 160, which acts as the Nucleophile. DUMP-binding positions include 180-183 (RSCD), asparagine 191, and 221-223 (HIY). Aspartate 183 serves as a coordination point for (6R)-5,10-methylene-5,6,7,8-tetrahydrofolate. Position 282 (serine 282) interacts with (6R)-5,10-methylene-5,6,7,8-tetrahydrofolate.

It belongs to the thymidylate synthase family. Bacterial-type ThyA subfamily. As to quaternary structure, homodimer.

It localises to the cytoplasm. It carries out the reaction dUMP + (6R)-5,10-methylene-5,6,7,8-tetrahydrofolate = 7,8-dihydrofolate + dTMP. It functions in the pathway pyrimidine metabolism; dTTP biosynthesis. In terms of biological role, catalyzes the reductive methylation of 2'-deoxyuridine-5'-monophosphate (dUMP) to 2'-deoxythymidine-5'-monophosphate (dTMP) while utilizing 5,10-methylenetetrahydrofolate (mTHF) as the methyl donor and reductant in the reaction, yielding dihydrofolate (DHF) as a by-product. This enzymatic reaction provides an intracellular de novo source of dTMP, an essential precursor for DNA biosynthesis. In Pasteurella multocida (strain Pm70), this protein is Thymidylate synthase.